The chain runs to 219 residues: uncharacterized protein (219 aa).

Residues 70 to 102 are disordered; that stretch reads VHIGDNHPEPKNESKTQPKIESKKEPTLKQEEQ. Basic and acidic residues predominate over residues 73-101; sequence GDNHPEPKNESKTQPKIESKKEPTLKQEE. The stretch at 96-120 forms a coiled coil; sequence TLKQEEQTIQAEEEAQKIAKEETRE. 3 helical membrane-spanning segments follow: residues 126 to 146, 153 to 173, and 192 to 212; these read GGEIIIDIMLGILLGIAVNML, IFGLKGTAKFPIQLVLIVIVL, and TYGVIFIPIFITAQRNFAIFF.

The protein localises to the membrane. This is an uncharacterized protein from Acanthamoeba polyphaga mimivirus (APMV).